Here is a 396-residue protein sequence, read N- to C-terminus: Elongation factor Tu (396 aa).

Residues 10–206 (KPHCNIGTIG…NVDEYIPQPE (197 aa)) form the tr-type G domain. Residues 19–26 (GHVDHGKT) are G1. 19 to 26 (GHVDHGKT) lines the GTP pocket. Thr-26 contacts Mg(2+). The segment at 60–64 (GITIS) is G2. Residues 81 to 84 (DCPG) form a G3 region. Residues 81–85 (DCPGH) and 136–139 (NKCD) each bind GTP. Positions 136-139 (NKCD) are G4. The segment at 174-176 (SAL) is G5.

This sequence belongs to the TRAFAC class translation factor GTPase superfamily. Classic translation factor GTPase family. EF-Tu/EF-1A subfamily. In terms of assembly, monomer.

The protein resides in the cytoplasm. It catalyses the reaction GTP + H2O = GDP + phosphate + H(+). In terms of biological role, GTP hydrolase that promotes the GTP-dependent binding of aminoacyl-tRNA to the A-site of ribosomes during protein biosynthesis. The chain is Elongation factor Tu from Afipia carboxidovorans (strain ATCC 49405 / DSM 1227 / KCTC 32145 / OM5) (Oligotropha carboxidovorans).